Here is a 520-residue protein sequence, read N- to C-terminus: Amine oxidase [flavin-containing] B (520 aa).

The residue at position 2 (S2) is an N-acetylserine. Topologically, residues 2 to 489 (SSKCDVVVVG…TFLERHLPSV (488 aa)) are cytoplasmic. An N6-acetyllysine modification is found at K52. Residue C397 is modified to S-8alpha-FAD cysteine. A helical; Anchor for type IV membrane protein transmembrane segment spans residues 490–516 (PGLLRLIGLTAIFSATALGYLAHKRGL). Over 517 to 520 (LVRV) the chain is Mitochondrial intermembrane.

This sequence belongs to the flavin monoamine oxidase family. In terms of assembly, monomer, homo- or heterodimer (containing two subunits of similar size). Each subunit contains a covalently bound flavin. Enzymatically active as monomer. FAD is required as a cofactor.

It localises to the mitochondrion outer membrane. It catalyses the reaction a secondary aliphatic amine + O2 + H2O = a primary amine + an aldehyde + H2O2. It carries out the reaction (R)-adrenaline + O2 + H2O = (R)-3,4-dihydroxymandelaldehyde + methylamine + H2O2. The catalysed reaction is a primary methyl amine + O2 + H2O = an aldehyde + H2O2 + NH4(+). The enzyme catalyses benzylamine + O2 + H2O = benzaldehyde + H2O2 + NH4(+). It catalyses the reaction dopamine + O2 + H2O = 3,4-dihydroxyphenylacetaldehyde + H2O2 + NH4(+). It carries out the reaction tyramine + O2 + H2O = (4-hydroxyphenyl)acetaldehyde + H2O2 + NH4(+). The catalysed reaction is (R)-noradrenaline + O2 + H2O = (R)-3,4-dihydroxymandelaldehyde + H2O2 + NH4(+). The enzyme catalyses 2-phenylethylamine + O2 + H2O = 2-phenylacetaldehyde + H2O2 + NH4(+). It catalyses the reaction N-acetylputrescine + O2 + H2O = 4-acetamidobutanal + H2O2 + NH4(+). Functionally, catalyzes the oxidative deamination of primary and some secondary amines such as neurotransmitters, and exogenous amines including the tertiary amine, neurotoxin 1-methyl-4-phenyl-1,2,3,6-tetrahydropyridine (MPTP), with concomitant reduction of oxygen to hydrogen peroxide and participates in the metabolism of neuroactive and vasoactive amines in the central nervous system and peripheral tissues. Preferentially degrades benzylamine and phenylethylamine. This Sus scrofa (Pig) protein is Amine oxidase [flavin-containing] B.